We begin with the raw amino-acid sequence, 156 residues long: MRSSAKQEELVRAFKALLKEEKFSSQGEIVLALQDQGFENINQSKVSRMLTKFGAVRTRNAKMEMVYCLPAELGVPTTSSPLKNLVLDIDYNDAVVVIHTSPGAAQLIARLLDSLGKAEGILGTIAGDDTIFTMPASGFSVRDLYEAILELFEQEL.

This sequence belongs to the ArgR family.

It is found in the cytoplasm. It participates in amino-acid biosynthesis; L-arginine biosynthesis [regulation]. In terms of biological role, regulates arginine biosynthesis genes. This Salmonella paratyphi C (strain RKS4594) protein is Arginine repressor.